A 235-amino-acid polypeptide reads, in one-letter code: Germin-like protein 1-4 (235 aa).

The N-terminal stretch at 1-27 (MAAKLPTVVLLASFAAVILSLAAPLLA) is a signal peptide. Cysteines 37 and 55 form a disulfide. A glycan (N-linked (GlcNAc...) asparagine) is linked at Asn60. Residues 69–226 (PGLGKPADVY…AFQVDGGVVE (158 aa)) form the Cupin type-1 domain. Mn(2+) is bound by residues His120, His122, Glu127, and His171.

It belongs to the germin family. In terms of assembly, oligomer (believed to be a pentamer but probably hexamer).

The protein resides in the secreted. It is found in the extracellular space. The protein localises to the apoplast. In terms of biological role, may play a role in plant defense. Probably has no oxalate oxidase activity even if the active site is conserved. In Oryza sativa subsp. japonica (Rice), this protein is Germin-like protein 1-4.